We begin with the raw amino-acid sequence, 343 residues long: Cyclic AMP-AMP-AMP synthase (343 aa).

The protein belongs to the CD-NTase family. D01 subfamily. Mg(2+) is required as a cofactor.

The enzyme catalyses 3 ATP = 2',3',3'-c-tri-AMP + 3 diphosphate. Its function is as follows. Cyclic nucleotide synthase (second messenger synthase) of a CBASS antivirus system. CBASS (cyclic oligonucleotide-based antiphage signaling system) provides immunity against bacteriophage. The CD-NTase protein synthesizes cyclic nucleotides in response to infection; these serve as specific second messenger signals. The signals activate a diverse range of effectors, leading to bacterial cell death and thus abortive phage infection. A type II-C(AAAA) CBASS system. Cyclic trinucleotide synthase that catalyzes the synthesis of 2',3',3'-cyclic AMP-AMP-AMP (2',3',3'-c-tri-AMP or 2'3'3'-cAAA) as the major product, as well as another cyclic AMP(4) 2'-5'-linked minor product that acts as a second messenger for cell signal transduction. The sequence is that of Cyclic AMP-AMP-AMP synthase from Acinetobacter sp. (strain ATCC 27244 / 9458).